Consider the following 286-residue polypeptide: Isopentenyl-diphosphate Delta-isomerase II (286 aa).

The 153-residue stretch at 104–256 (MLHRAFSVFL…GLKLSPWFRL (153 aa)) folds into the Nudix hydrolase domain. Residues cysteine 141 and glutamate 203 contribute to the active site.

Belongs to the IPP isomerase type 1 family.

The enzyme catalyses isopentenyl diphosphate = dimethylallyl diphosphate. The protein operates within isoprenoid biosynthesis; dimethylallyl diphosphate biosynthesis; dimethylallyl diphosphate from isopentenyl diphosphate: step 1/1. It functions in the pathway porphyrin-containing compound metabolism; chlorophyll biosynthesis. Its function is as follows. Catalyzes the 1,3-allylic rearrangement of the homoallylic substrate isopentenyl (IPP) to its highly electrophilic allylic isomer, dimethylallyl diphosphate (DMAPP). This Clarkia breweri (Fairy fans) protein is Isopentenyl-diphosphate Delta-isomerase II (IPI2).